We begin with the raw amino-acid sequence, 323 residues long: Small ribosomal subunit protein mS35 (323 aa).

The interval 31-59 (PVPTPSLPERTPGNERPPRRKALPPRTEK) is disordered. Positions 257–321 (SSERNILETL…YKESVKRLLN (65 aa)) form a coiled coil.

This sequence belongs to the mitochondrion-specific ribosomal protein mS35 family. Component of the mitochondrial small ribosomal subunit (mt-SSU). Mature mammalian 55S mitochondrial ribosomes consist of a small (28S) and a large (39S) subunit. The 28S small subunit contains a 12S ribosomal RNA (12S mt-rRNA) and 30 different proteins. The 39S large subunit contains a 16S rRNA (16S mt-rRNA), a copy of mitochondrial valine transfer RNA (mt-tRNA(Val)), which plays an integral structural role, and 52 different proteins.

Its subcellular location is the mitochondrion. The protein is Small ribosomal subunit protein mS35 of Homo sapiens (Human).